The chain runs to 187 residues: Elongation factor P (187 aa).

Belongs to the elongation factor P family.

Its subcellular location is the cytoplasm. It participates in protein biosynthesis; polypeptide chain elongation. Involved in peptide bond synthesis. Stimulates efficient translation and peptide-bond synthesis on native or reconstituted 70S ribosomes in vitro. Probably functions indirectly by altering the affinity of the ribosome for aminoacyl-tRNA, thus increasing their reactivity as acceptors for peptidyl transferase. The chain is Elongation factor P from Wolinella succinogenes (strain ATCC 29543 / DSM 1740 / CCUG 13145 / JCM 31913 / LMG 7466 / NCTC 11488 / FDC 602W) (Vibrio succinogenes).